The following is a 186-amino-acid chain: ADP-ribosylation factor-like protein 8A (186 aa).

An intramembrane region (note=Mediates targeting to membranes) is located at residues 1–19; the sequence is MIALFNKLLDWFKALFWKE. Residues 29–35, 71–75, and 130–133 contribute to the GTP site; these read QYSGKTT, DIGGQ, and NKRD.

The protein belongs to the small GTPase superfamily. Arf family. Interacts with PLEKHM1. When GTP-bound, interacts with RUFY3 and RUFY4, but not with RUFY1, nor RUFY2. In terms of tissue distribution, ubiquitously expressed.

The protein resides in the late endosome membrane. Its subcellular location is the lysosome membrane. The protein localises to the cytoplasm. It localises to the cytoskeleton. It is found in the spindle. The protein resides in the cell projection. Its subcellular location is the axon. The protein localises to the synapse. Functionally, plays a role in lysosome motility. In neurons, mediates the anterograde axonal long-range transport of presynaptic lysosome-related vesicles required for presynaptic biogenesis and synaptic function. May play a role in chromosome segregation. This is ADP-ribosylation factor-like protein 8A (ARL8A) from Homo sapiens (Human).